A 438-amino-acid chain; its full sequence is 23S rRNA (uracil(1939)-C(5))-methyltransferase RlmD (438 aa).

Positions 4 to 68 (FYTPGRRTAT…RHFARGRVTR (65 aa)) constitute a TRAM domain. [4Fe-4S] cluster contacts are provided by cysteine 81, cysteine 87, cysteine 90, and cysteine 167. Glutamine 269, phenylalanine 298, asparagine 303, glutamate 319, asparagine 346, and aspartate 367 together coordinate S-adenosyl-L-methionine. The Nucleophile role is filled by cysteine 393.

It belongs to the class I-like SAM-binding methyltransferase superfamily. RNA M5U methyltransferase family. RlmD subfamily.

It carries out the reaction uridine(1939) in 23S rRNA + S-adenosyl-L-methionine = 5-methyluridine(1939) in 23S rRNA + S-adenosyl-L-homocysteine + H(+). Its function is as follows. Catalyzes the formation of 5-methyl-uridine at position 1939 (m5U1939) in 23S rRNA. This is 23S rRNA (uracil(1939)-C(5))-methyltransferase RlmD from Edwardsiella ictaluri (strain 93-146).